A 908-amino-acid polypeptide reads, in one-letter code: Putative cell signaling protein HAM1 (908 aa).

Disordered stretches follow at residues 1-24 and 177-359; these read MSVA…SAVS and TKAA…EHRQ. Basic and acidic residues-rich tracts occupy residues 179–192, 231–247, 261–283, 306–321, and 338–359; these read AADK…KLDS, HPRD…DKGK, AKSD…KETG, EQKE…KRDA, and NQEK…EHRQ. A coiled-coil region spans residues 255 to 282; the sequence is YNQAQEAKSDAQSKAQDLKSSARDYKET.

Palmitoylated.

May act as a negative regulator of mating during vegetative growth. The chain is Putative cell signaling protein HAM1 from Cryptococcus neoformans var. grubii serotype A (strain H99 / ATCC 208821 / CBS 10515 / FGSC 9487) (Filobasidiella neoformans var. grubii).